The sequence spans 219 residues: UPF0173 metal-dependent hydrolase Mhun_1705 (219 aa).

The protein belongs to the UPF0173 family.

The sequence is that of UPF0173 metal-dependent hydrolase Mhun_1705 from Methanospirillum hungatei JF-1 (strain ATCC 27890 / DSM 864 / NBRC 100397 / JF-1).